The primary structure comprises 302 residues: Probable 2-(5''-triphosphoribosyl)-3'-dephosphocoenzyme-A synthase 1 (302 aa).

It belongs to the CitG/MdcB family.

It catalyses the reaction 3'-dephospho-CoA + ATP = 2'-(5''-triphospho-alpha-D-ribosyl)-3'-dephospho-CoA + adenine. The chain is Probable 2-(5''-triphosphoribosyl)-3'-dephosphocoenzyme-A synthase 1 from Salmonella typhimurium (strain LT2 / SGSC1412 / ATCC 700720).